The following is a 491-amino-acid chain: Ketol-acid reductoisomerase (NADP(+)) (491 aa).

The 194-residue stretch at 15–208 folds into the KARI N-terminal Rossmann domain; the sequence is AQLGKCRFMG…GGHRAGVLES (194 aa). NADP(+) is bound by residues 45–48, arginine 68, arginine 76, serine 78, and 108–110; these read CGAQ and DKQ. The active site involves histidine 132. Glycine 158 contacts NADP(+). KARI C-terminal knotted domains are found at residues 209 to 344 and 345 to 484; these read SFVA…TAPQ and YEGK…MTDM. Aspartate 217, glutamate 221, glutamate 389, and glutamate 393 together coordinate Mg(2+). Serine 414 provides a ligand contact to substrate.

This sequence belongs to the ketol-acid reductoisomerase family. Mg(2+) is required as a cofactor.

The catalysed reaction is (2R)-2,3-dihydroxy-3-methylbutanoate + NADP(+) = (2S)-2-acetolactate + NADPH + H(+). It catalyses the reaction (2R,3R)-2,3-dihydroxy-3-methylpentanoate + NADP(+) = (S)-2-ethyl-2-hydroxy-3-oxobutanoate + NADPH + H(+). The protein operates within amino-acid biosynthesis; L-isoleucine biosynthesis; L-isoleucine from 2-oxobutanoate: step 2/4. It participates in amino-acid biosynthesis; L-valine biosynthesis; L-valine from pyruvate: step 2/4. In terms of biological role, involved in the biosynthesis of branched-chain amino acids (BCAA). Catalyzes an alkyl-migration followed by a ketol-acid reduction of (S)-2-acetolactate (S2AL) to yield (R)-2,3-dihydroxy-isovalerate. In the isomerase reaction, S2AL is rearranged via a Mg-dependent methyl migration to produce 3-hydroxy-3-methyl-2-ketobutyrate (HMKB). In the reductase reaction, this 2-ketoacid undergoes a metal-dependent reduction by NADPH to yield (R)-2,3-dihydroxy-isovalerate. This chain is Ketol-acid reductoisomerase (NADP(+)), found in Klebsiella pneumoniae (strain 342).